Consider the following 601-residue polypeptide: Elongation factor 4 (601 aa).

A tr-type G domain is found at 6–188 (NYIRNFSIVA…AIVRQLPPPH (183 aa)). GTP contacts are provided by residues 18-23 (DHGKST) and 135-138 (NKVD).

Belongs to the TRAFAC class translation factor GTPase superfamily. Classic translation factor GTPase family. LepA subfamily.

The protein resides in the cell inner membrane. It catalyses the reaction GTP + H2O = GDP + phosphate + H(+). In terms of biological role, required for accurate and efficient protein synthesis under certain stress conditions. May act as a fidelity factor of the translation reaction, by catalyzing a one-codon backward translocation of tRNAs on improperly translocated ribosomes. Back-translocation proceeds from a post-translocation (POST) complex to a pre-translocation (PRE) complex, thus giving elongation factor G a second chance to translocate the tRNAs correctly. Binds to ribosomes in a GTP-dependent manner. The sequence is that of Elongation factor 4 from Bartonella quintana (strain Toulouse) (Rochalimaea quintana).